The chain runs to 471 residues: Alpha-galactosidase (471 aa).

Residues 1-18 (MSYIYLFITAAAVTGALG) form the signal peptide. A disulfide bond links cysteine 42 and cysteine 74. Residues aspartate 72 and aspartate 73 each contribute to the substrate site. Asparagine 82 is a glycosylation site (N-linked (GlcNAc...) asparagine). Cysteine 121 and cysteine 151 form a disulfide bridge. Lysine 147 is a substrate binding site. The active-site Nucleophile is aspartate 149. Asparagine 175 carries N-linked (GlcNAc...) asparagine glycosylation. Arginine 205 is a binding site for substrate. The active-site Proton donor is the aspartate 209. Intrachain disulfides connect cysteine 221–cysteine 237 and cysteine 223–cysteine 230. Substrate is bound at residue glutamine 251. Residues asparagine 270, asparagine 361, asparagine 370, asparagine 417, asparagine 422, asparagine 435, and asparagine 454 are each glycosylated (N-linked (GlcNAc...) asparagine).

It belongs to the glycosyl hydrolase 27 family. In terms of assembly, homotetramer.

It is found in the secreted. It carries out the reaction Hydrolysis of terminal, non-reducing alpha-D-galactose residues in alpha-D-galactosides, including galactose oligosaccharides, galactomannans and galactolipids.. The sequence is that of Alpha-galactosidase (MEL) from Saccharomyces mikatae (Yeast).